The sequence spans 341 residues: Farnesyl pyrophosphate synthase 2 (341 aa).

3 residues coordinate isopentenyl diphosphate: K46, R49, and Q85. Mg(2+)-binding residues include D92 and D96. Position 101 (R101) interacts with dimethylallyl diphosphate. R102 contributes to the isopentenyl diphosphate binding site. Dimethylallyl diphosphate-binding residues include K189, T190, Q228, K245, and K254.

It belongs to the FPP/GGPP synthase family. Mg(2+) serves as cofactor. As to expression, mainly expressed in trichomes, roots and flowers, and, to a lower extent, in leaves and stems.

The protein resides in the cytoplasm. It is found in the nucleus. The enzyme catalyses isopentenyl diphosphate + dimethylallyl diphosphate = (2E)-geranyl diphosphate + diphosphate. It catalyses the reaction isopentenyl diphosphate + (2E)-geranyl diphosphate = (2E,6E)-farnesyl diphosphate + diphosphate. It participates in isoprenoid biosynthesis; farnesyl diphosphate biosynthesis; farnesyl diphosphate from geranyl diphosphate and isopentenyl diphosphate: step 1/1. Its pathway is sesquiterpene biosynthesis. It functions in the pathway isoprenoid biosynthesis; geranyl diphosphate biosynthesis; geranyl diphosphate from dimethylallyl diphosphate and isopentenyl diphosphate: step 1/1. Its function is as follows. Catalyzes the sequential condensation of isopentenyl pyrophosphate with the allylic pyrophosphates, dimethylallyl pyrophosphate, and then with the resultant geranylpyrophosphate to the ultimate product farnesyl pyrophosphate. This chain is Farnesyl pyrophosphate synthase 2, found in Cannabis sativa (Hemp).